The chain runs to 441 residues: Histidine--tRNA ligase (441 aa).

The protein belongs to the class-II aminoacyl-tRNA synthetase family. Homodimer.

The protein localises to the cytoplasm. The enzyme catalyses tRNA(His) + L-histidine + ATP = L-histidyl-tRNA(His) + AMP + diphosphate + H(+). In Synechococcus sp. (strain WH7803), this protein is Histidine--tRNA ligase.